The primary structure comprises 356 residues: MKELQITTGCLLLMVAAIGKTSAIYSMSETCEYTPDGFIADPNSCQSYGYCKNNQLVGTGKCPDGYLYNNKLGICDSPANVKCISDSKNACLHATDNSFVADPTNCNGYCYCSNKTATCTTCPEFQLFDSKQIKCVYALEKPECTADSICRLVPNAVYVGNPNECGEYISCFNGIGTEGRCASGYFNKQLGGCQTTNPCLASSPNPDIGLGVIENLADNNFVCQVNGGNPTEEKPVFISDGQTCMGYYKCTSRNGPGIWGKCPKGLHFNEGKCVTPFTFPCTFDRCGNLNREFVGAIRTECKNFLICKNETSQGMAYNYAKYIGLPCTDKNYPFFNEVSGTCEKTSPKSDTYKLCV.

An N-terminal signal peptide occupies residues 1–23 (MKELQITTGCLLLMVAAIGKTSA). Chitin-binding type-2 domains are found at residues 28 to 85 (SETC…KCIS), 88 to 146 (KNAC…ECTA), 147 to 201 (DSIC…PCLA), 220 to 283 (NFVC…PCTF), and 286 to 355 (CGNL…YKLC). A disulfide bridge connects residues cysteine 62 and cysteine 75. An N-linked (GlcNAc...) asparagine glycan is attached at asparagine 114. 3 disulfides stabilise this stretch: cysteine 122-cysteine 135, cysteine 181-cysteine 193, and cysteine 262-cysteine 273. Asparagine 309 carries N-linked (GlcNAc...) asparagine glycosylation.

Post-translationally, glycosylated. In terms of tissue distribution, larval peritrophic membrane.

May have roles in the maintenance of peritrophic membrane structure and in the determination of the porosity of the peritrophic membrane. May bind chitin or related oligosaccharide structures. This chain is Peritrophin-44, found in Lucilia cuprina (Green bottle fly).